The primary structure comprises 410 residues: WD repeat and FYVE domain-containing protein 1 (410 aa).

WD repeat units follow at residues 22–61, 66–105, 112–150, 153–192, 197–236, and 240–279; these read GHQDAVTAALLIPKEDGVITASEDRTIRVWLKRDSGQYWP, TMASPCSAMAYHHDSRRIFVGQDNGAVMEFHVSEDFNKMN, AHQNRVSAIIFSLAAEWVISTGHDKCVSWMCTRSGNMLG, FFSSWASCLQYDLDTQHAFVGDYSGQITLLKLEQNTCSVI, GHEGSIACLWWDPIQRLLFSGASDNSVIMWDIGGRKGRTL, and GHHDRVQSLCYLQLTRQLVSCSADGGIAVWNMDVSREEAP. The segment at 281–352 adopts an FYVE-type zinc-finger fold; sequence WLESDSCQKC…VCDSCYDSIK (72 aa). Residues cysteine 287, cysteine 290, cysteine 314, cysteine 317, cysteine 322, cysteine 325, cysteine 344, and cysteine 347 each coordinate Zn(2+). A WD 7 repeat occupies 364–403; that stretch reads EGKHNISHMSMDIARGLMVTCGTDRVVKIWDMTPVVGCSL. Serine 408 is modified (phosphoserine).

Binds PtdIns3P in vitro with high specificity over other phosphoinositides. Interacts (via WD repeat 2) with tyrosine-phosphorylated TLR3 (via TIR domain) in response to poly(I:C). Interacts with TLR4 in response to LPS. Interacts with TICAM1 in response to poly(I:C).

Its subcellular location is the early endosome. In terms of biological role, positively regulates TLR3- and TLR4-mediated signaling pathways by bridging the interaction between TLR3 or TLR4 and TICAM1. Promotes TLR3/4 ligand-induced activation of transcription factors IRF3 and NF-kappa-B, as well as the production of IFN-beta and inflammatory cytokines. The protein is WD repeat and FYVE domain-containing protein 1 (Wdfy1) of Mus musculus (Mouse).